Reading from the N-terminus, the 272-residue chain is uncharacterized protein (272 aa).

The active site involves Glu163.

The protein belongs to the glycosyl hydrolase 25 family.

This is an uncharacterized protein from Escherichia coli O157:H7.